The chain runs to 270 residues: Undecaprenyl-diphosphatase (270 aa).

Helical transmembrane passes span 14 to 34 (GLTE…PTFL), 40 to 60 (GITF…LYFW), 88 to 108 (FYII…ETTI), 117 to 137 (SLIA…DTSG), 146 to 166 (ITLK…IPGV), 189 to 209 (FSFL…LSGL), 221 to 241 (PLLI…AFLL), and 249 to 269 (LYPF…FINF).

Belongs to the UppP family.

Its subcellular location is the cell inner membrane. The enzyme catalyses di-trans,octa-cis-undecaprenyl diphosphate + H2O = di-trans,octa-cis-undecaprenyl phosphate + phosphate + H(+). Its function is as follows. Catalyzes the dephosphorylation of undecaprenyl diphosphate (UPP). Confers resistance to bacitracin. This chain is Undecaprenyl-diphosphatase, found in Geotalea daltonii (strain DSM 22248 / JCM 15807 / FRC-32) (Geobacter daltonii).